The following is a 343-amino-acid chain: Probable transposase for insertion sequence element (343 aa).

It belongs to the transposase mutator family.

Functionally, required for the transposition of the insertion element. The protein is Probable transposase for insertion sequence element of Corynebacterium diphtheriae.